A 149-amino-acid chain; its full sequence is MYTQGAFVIVLNESQQILLVKRKDVPLWDLPGGRVDPGESAEEAAVREILEETGYNAALSAKIGVYQRPKFQDEQHLFFGSITGGQAMADGTETAGLKWVSPGRLPLFMVPNRKRQINDFKNGAQDVNVTVKDSGLLAAIDLLKRRLGK.

The region spanning 1–123 is the Nudix hydrolase domain; that stretch reads MYTQGAFVIV…KRQINDFKNG (123 aa). Positions 33 to 54 match the Nudix box motif; the sequence is GRVDPGESAEEAAVREILEETG. 2 residues coordinate Mg(2+): Glu-48 and Glu-52.

This sequence belongs to the Nudix hydrolase family. Mg(2+) serves as cofactor. The cofactor is Mn(2+).

The catalysed reaction is 8-oxo-dGTP + H2O = 8-oxo-dGMP + diphosphate + H(+). Functionally, may be involved in the GO system responsible for removing an oxidatively damaged form of guanine (7,8-dihydro-8-oxoguanine, 8-oxo-dGTP) from DNA and the nucleotide pool. 8-oxo-dGTP is inserted opposite dA and dC residues of template DNA with almost equal efficiency thus leading to A.T to G.C transversions. MutT specifically degrades 8-oxo-dGTP to the monophosphate. Functions, in conjunction with ytkD, to protect vegetatively growing cells from DNA-damaging agents such as H(2)O(2) or t-BHP (t-butylhydroperoxide). The 2 proteins do not however protect spores. This chain is Putative 8-oxo-dGTP diphosphatase (mutT), found in Bacillus subtilis (strain 168).